The sequence spans 497 residues: MDPLGAPSQFVDVDTLPSWGDSCQDELNSSDTTAEIFQEDTVRSPFLYNKDVNGKVVLWKGDVALLNCTAIVNTSNESLTDKNPVSESIFMLAGPDLKEDLQKLKGCRTGEAKLTKGFNLAARFIIHTVGPKYKSRYRTAAESSLYSCYRNVLQLAKEQSMSSVGFCVINSAKRGYPLEDATHIALRTVRRFLEIHGETIEKVVFAVSDLEEGTYQKLLPLYFPRSLKEENRSLPYLPADIGNAEGEPVVPERQIRISEKPGAPEDNQEEEDEGLGVDLSFIGSHAFARMEGDIDKQRKLILQGQLSEAALQKQHQRNYNRWLCQARSEDLSDIASLKALYQTGVDNCGRTVMVVVGRNIPVTLIDMDKALLYFIHVMDHIAVKEYVLVYFHTLTSEYNHLDSDFLKKLYDVVDVKYKRNLKAVYFVHPTFRSKVSTWFFTTFSVSGLKDKIHHVDSLHQLFSAISPEQIDFPPFVLEYDARENGPYYTSYPPSPDL.

Positions 43 to 223 constitute a Macro domain; that stretch reads RSPFLYNKDV…TYQKLLPLYF (181 aa). The disordered stretch occupies residues 252–273; it reads ERQIRISEKPGAPEDNQEEEDE. Residues 253-263 are compositionally biased toward basic and acidic residues; it reads RQIRISEKPGA. A Phosphoserine modification is found at S280. Residues 333–481 enclose the CRAL-TRIO domain; it reads DIASLKALYQ…FPPFVLEYDA (149 aa).

Belongs to the GDAP2 family.

The chain is Ganglioside-induced differentiation-associated protein 2 (GDAP2) from Homo sapiens (Human).